The following is a 68-amino-acid chain: MTETEIFAYIEAASIAIGIPLEPARARAVAHHFSRTALLAEMLESVPLSPESELAEIYRPAPFPAEDI.

As to quaternary structure, heterotetramer consisting of 2 AtzE and 2 AtzG subunits.

The protein operates within xenobiotic degradation; atrazine degradation. In terms of biological role, important for the activity of the AtzE subunit of 1-carboxybiuret hydrolase. The chain is 1-carboxybiuret hydrolase subunit AtzG from Pseudomonas sp. (strain ADP).